A 212-amino-acid chain; its full sequence is ATP phosphoribosyltransferase (212 aa).

This sequence belongs to the ATP phosphoribosyltransferase family. Short subfamily. As to quaternary structure, heteromultimer composed of HisG and HisZ subunits.

Its subcellular location is the cytoplasm. It carries out the reaction 1-(5-phospho-beta-D-ribosyl)-ATP + diphosphate = 5-phospho-alpha-D-ribose 1-diphosphate + ATP. It participates in amino-acid biosynthesis; L-histidine biosynthesis; L-histidine from 5-phospho-alpha-D-ribose 1-diphosphate: step 1/9. In terms of biological role, catalyzes the condensation of ATP and 5-phosphoribose 1-diphosphate to form N'-(5'-phosphoribosyl)-ATP (PR-ATP). Has a crucial role in the pathway because the rate of histidine biosynthesis seems to be controlled primarily by regulation of HisG enzymatic activity. This Halalkalibacterium halodurans (strain ATCC BAA-125 / DSM 18197 / FERM 7344 / JCM 9153 / C-125) (Bacillus halodurans) protein is ATP phosphoribosyltransferase (hisG).